The following is a 72-amino-acid chain: Large ribosomal subunit protein uL29 (72 aa).

It belongs to the universal ribosomal protein uL29 family.

This Chlamydia abortus (strain DSM 27085 / S26/3) (Chlamydophila abortus) protein is Large ribosomal subunit protein uL29.